The primary structure comprises 88 residues: Small ribosomal subunit protein uS15c (88 aa).

Belongs to the universal ribosomal protein uS15 family. As to quaternary structure, part of the 30S ribosomal subunit.

The protein resides in the plastid. Its subcellular location is the chloroplast. This Draba nemorosa (Woodland whitlowgrass) protein is Small ribosomal subunit protein uS15c (rps15).